Reading from the N-terminus, the 408-residue chain is Phosphopentomutase (408 aa).

6 residues coordinate Mn(2+): Asp10, Asp307, His312, Asp348, His349, and His360.

The protein belongs to the phosphopentomutase family. Mn(2+) serves as cofactor.

It is found in the cytoplasm. It carries out the reaction 2-deoxy-alpha-D-ribose 1-phosphate = 2-deoxy-D-ribose 5-phosphate. The enzyme catalyses alpha-D-ribose 1-phosphate = D-ribose 5-phosphate. Its pathway is carbohydrate degradation; 2-deoxy-D-ribose 1-phosphate degradation; D-glyceraldehyde 3-phosphate and acetaldehyde from 2-deoxy-alpha-D-ribose 1-phosphate: step 1/2. Isomerase that catalyzes the conversion of deoxy-ribose 1-phosphate (dRib-1-P) and ribose 1-phosphate (Rib-1-P) to deoxy-ribose 5-phosphate (dRib-5-P) and ribose 5-phosphate (Rib-5-P), respectively. This is Phosphopentomutase from Proteus mirabilis (strain HI4320).